The primary structure comprises 245 residues: Heat shock transcription factor (245 aa).

A DNA-binding region spans residues Lys-17–Ser-115. The segment at Ser-130–Ala-169 is involved in trimerization.

The protein belongs to the HSF family. Homotrimer. Homotrimerization increases the affinity of HSF1 to DNA.

Its subcellular location is the nucleus. Functionally, DNA-binding transcription factor that specifically binds heat shock promoter elements (HSE) and activates transcription. This Enterocytozoon bieneusi (strain H348) (Microsporidian parasite) protein is Heat shock transcription factor.